We begin with the raw amino-acid sequence, 119 residues long: MRRSLRLQGKKNFSRVYKEGSVVRSDYVVVYFLPASEQRVAVVVSKRFGNAVRRNRIRRLLLEAWQENHDHLPSGYYIILPRSSLLSVEENVWRSKVKELFHEWQWASGKNSPHCSAVL.

It belongs to the RnpA family. As to quaternary structure, consists of a catalytic RNA component (M1 or rnpB) and a protein subunit.

It carries out the reaction Endonucleolytic cleavage of RNA, removing 5'-extranucleotides from tRNA precursor.. In terms of biological role, RNaseP catalyzes the removal of the 5'-leader sequence from pre-tRNA to produce the mature 5'-terminus. It can also cleave other RNA substrates such as 4.5S RNA. The protein component plays an auxiliary but essential role in vivo by binding to the 5'-leader sequence and broadening the substrate specificity of the ribozyme. In Coprothermobacter proteolyticus (strain ATCC 35245 / DSM 5265 / OCM 4 / BT), this protein is Ribonuclease P protein component.